A 59-amino-acid chain; its full sequence is uncharacterized protein (59 aa).

The disordered stretch occupies residues 1 to 59; it reads MAKKPGENTGKNGGIYQEVGPRGGKKDNFATVKDNERLPPTTKPGNGWVLDKRTPDSKK. Basic and acidic residues-rich tracts occupy residues 24–37 and 50–59; these read GKKDNFATVKDNER and LDKRTPDSKK.

This is an uncharacterized protein from Salmonella phage P22 (Bacteriophage P22).